The following is a 178-amino-acid chain: Probable chorismate pyruvate-lyase (178 aa).

Substrate is bound by residues Arg72, Leu110, and Glu169.

Belongs to the UbiC family.

Its subcellular location is the cytoplasm. It catalyses the reaction chorismate = 4-hydroxybenzoate + pyruvate. The protein operates within cofactor biosynthesis; ubiquinone biosynthesis. Functionally, removes the pyruvyl group from chorismate, with concomitant aromatization of the ring, to provide 4-hydroxybenzoate (4HB) for the ubiquinone pathway. This Nitrosomonas europaea (strain ATCC 19718 / CIP 103999 / KCTC 2705 / NBRC 14298) protein is Probable chorismate pyruvate-lyase.